Reading from the N-terminus, the 43-residue chain is Potassium channel toxin gamma-KTx 4.2 (43 aa).

4 disulfide bridges follow: Cys-5-Cys-23, Cys-11-Cys-34, Cys-20-Cys-39, and Cys-24-Cys-41.

Belongs to the ergtoxin family. Gamma-KTx 4 subfamily. As to expression, expressed by the venom gland.

The protein localises to the secreted. In terms of biological role, reversibly blocks Kv11/ERG potassium channels. The sequence is that of Potassium channel toxin gamma-KTx 4.2 from Centruroides noxius (Mexican scorpion).